We begin with the raw amino-acid sequence, 338 residues long: Heat-inducible transcription repressor HrcA (338 aa).

This sequence belongs to the HrcA family.

Its function is as follows. Negative regulator of class I heat shock genes (grpE-dnaK-dnaJ and groELS operons). Prevents heat-shock induction of these operons. In Thermotoga maritima (strain ATCC 43589 / DSM 3109 / JCM 10099 / NBRC 100826 / MSB8), this protein is Heat-inducible transcription repressor HrcA.